We begin with the raw amino-acid sequence, 347 residues long: Elongation factor Ts (347 aa).

Positions 80–83 (TDFV) are involved in Mg(2+) ion dislocation from EF-Tu.

It belongs to the EF-Ts family.

The protein localises to the cytoplasm. Functionally, associates with the EF-Tu.GDP complex and induces the exchange of GDP to GTP. It remains bound to the aminoacyl-tRNA.EF-Tu.GTP complex up to the GTP hydrolysis stage on the ribosome. This Streptococcus gordonii (strain Challis / ATCC 35105 / BCRC 15272 / CH1 / DL1 / V288) protein is Elongation factor Ts.